We begin with the raw amino-acid sequence, 65 residues long: MPKLKTRKAAAKRFRQTGTGKFTRRKANRNHLLEHKSTARKNKLSHMAIVDERDEERVSLMLPYL.

The segment covering 1–15 has biased composition (basic residues); that stretch reads MPKLKTRKAAAKRFR. A disordered region spans residues 1 to 28; sequence MPKLKTRKAAAKRFRQTGTGKFTRRKAN.

This sequence belongs to the bacterial ribosomal protein bL35 family.

The sequence is that of Large ribosomal subunit protein bL35 from Cyanothece sp. (strain PCC 7425 / ATCC 29141).